We begin with the raw amino-acid sequence, 28 residues long: M-poneritoxin-Dq4b/U1-poneritoxin-Dq4c/U1-poneritoxin-Dq4d (28 aa).

M20 bears the Methionine sulfoxide; in form U1-PONTX-Dq4d mark. A28 carries the post-translational modification Alanine amide; in form Dq-1362 and U1-PONTX-Dq4d.

Occurs in 3 forms, M-PONTX-Dq4b has an amidated Ala-28, U1-PONTX-Dq4d has an amidated Ala-28 and an oxidized Met-20, U1-PONTX-Dq4c has no modifications at either Met-20 or Ala-28. Expressed by the venom gland.

It localises to the secreted. In terms of biological role, M-poneritoxin-Dq4b: this synthetic peptide has antimicrobial activity against Gram-positive bacteria B.amyloliquefacies S499 (MIC=0.1 mM), L.monocytogenes 2231 and S.aureus ATCC 29213, against Gram-negative bacteria P.putida BTP1, P.aeruginosa PaO1 and E.coli ATCC 10536, and against the fungi S.cerevisiae, R.mucilaginosa and C.cucumerinum. Not active against the fungi F.oxysporum and B.cinerea. The polypeptide is M-poneritoxin-Dq4b/U1-poneritoxin-Dq4c/U1-poneritoxin-Dq4d (Dinoponera quadriceps (South American ant)).